Reading from the N-terminus, the 467-residue chain is Adenosylhomocysteinase (467 aa).

Substrate is bound by residues Thr68, Asp144, and Glu169. 170–172 serves as a coordination point for NAD(+); sequence TTT. Residues Lys199 and Asp203 each coordinate substrate. Residues Asn204, 233 to 238, Glu256, Asn305, 326 to 328, and Asn373 contribute to the NAD(+) site; these read GYGDVG and IGH.

The protein belongs to the adenosylhomocysteinase family. Requires NAD(+) as cofactor.

It localises to the cytoplasm. The enzyme catalyses S-adenosyl-L-homocysteine + H2O = L-homocysteine + adenosine. It functions in the pathway amino-acid biosynthesis; L-homocysteine biosynthesis; L-homocysteine from S-adenosyl-L-homocysteine: step 1/1. Functionally, may play a key role in the regulation of the intracellular concentration of adenosylhomocysteine. The chain is Adenosylhomocysteinase from Acinetobacter baylyi (strain ATCC 33305 / BD413 / ADP1).